A 425-amino-acid chain; its full sequence is MGGLFSRWRAKPSTVEVLENIDKEIQALEEFREKNQRLQKLWVGRLIIYSSILYLFTCLIVYLWYLPDEFTARLVMTLPFFAFPLIIWTLRTVLIFFFSKRTERNNEALDDLKSQKKKILEEVMEKETYKTAKLILERFDPDSKKAKEFEPPSAGAAVTAKPGQEIRQRTAAQRNLSPAPASSSQGPPPQGPVSPGPAKDASAPGGPPERTVAPALPRRLGSPATSVPGMGLHPPGPPLARPILPRERGALDRIVEYLVGDGPQNRYALICQQCFSHNGMALKEEFEYIAFRCAYCFFLNPARKTRPQAPRLPEFSFEKRQAVEGSSSTGPTLLESVPSAESQLIEDSLEEQDVLDNSTEQRDDKIPVTEQTSQVIEKTSGPEEPAENQEETENEETSTNEAKSPVLRADSVPNLEPSEESLVTK.

Residue Gly-2 is the site of N-myristoyl glycine attachment. Over 2 to 45 (GGLFSRWRAKPSTVEVLENIDKEIQALEEFREKNQRLQKLWVGR) the chain is Cytoplasmic. Positions 15–41 (VEVLENIDKEIQALEEFREKNQRLQKL) form a coiled coil. Residues 46-66 (LIIYSSILYLFTCLIVYLWYL) form a helical membrane-spanning segment. Residues 67-77 (PDEFTARLVMT) are Lumenal-facing. Residues 78 to 98 (LPFFAFPLIIWTLRTVLIFFF) form a helical membrane-spanning segment. The Cytoplasmic portion of the chain corresponds to 99–425 (SKRTERNNEA…EPSEESLVTK (327 aa)). Positions 101–128 (RTERNNEALDDLKSQKKKILEEVMEKET) form a coiled coil. Phosphoserine is present on residues Ser-114, Ser-153, Ser-177, Ser-182, and Ser-194. Residues 144 to 242 (KKAKEFEPPS…HPPGPPLARP (99 aa)) form a disordered region. A compositionally biased stretch (pro residues) spans 186-195 (GPPPQGPVSP). Thr-211 carries the post-translational modification Phosphothreonine. Phosphoserine is present on Ser-222. The C4-type; plays a role in ER morphology zinc finger occupies 271-296 (CQQCFSHNGMALKEEFEYIAFRCAYC). A phosphoserine mark is found at Ser-316, Ser-348, and Ser-380. The tract at residues 320 to 425 (RQAVEGSSST…EPSEESLVTK (106 aa)) is disordered. A compositionally biased stretch (acidic residues) spans 384-398 (EPAENQEETENEETS). Ser-411 bears the Phosphoserine mark.

Belongs to the lunapark family. In terms of assembly, homodimer; homodimerization requires the C4-type zinc finger motif and decreases during mitosis in a phosphorylation-dependent manner. Myristoylated; myristoylation is necessary for the endoplasmic reticulum (ER) three-way ER tubular junction formation, but is not required neither for membrane translocation, membrane topology formation, nor for the specific localization to ER membranes. In terms of processing, phosphorylated. Phosphorylation occurs at Ser-177, Ser-182, Ser-222, Ser-316 and Ser-380 during interphase. Phosphorylation occurs at Ser-114, Ser-153, Ser-194, Thr-211 and Ser-348 during mitosis; these phosphorylations reduce both its homodimerization and the ER three-way tubular junction formation. Post-translationally, subject to proteasomal degradation following phosphorylation during mitosis. In terms of tissue distribution, expressed in most tissues at basal level, with reinforcement in distal limb buds, genital bud, and in parts of the central nervous system.

It localises to the endoplasmic reticulum membrane. In terms of biological role, endoplasmic reticulum (ER)-shaping membrane protein that plays a role in determining ER morphology. Involved in the stabilization of nascent three-way ER tubular junctions within the ER network. May also play a role as a curvature-stabilizing protein within three-way ER tubular junction network. May be involved in limb and central nervous system development. In Mus musculus (Mouse), this protein is Endoplasmic reticulum junction formation protein lunapark.